Here is a 244-residue protein sequence, read N- to C-terminus: uncharacterized protein (244 aa).

Positions 1–19 (MRGIFFLILILNFIGLIFS) are cleaved as a signal peptide. N-linked (GlcNAc...) asparagine glycans are attached at residues Asn45 and Asn77. ShKT domains lie at 67-105 (CNNP…CGKC) and 113-149 (CSDK…CNRC). Cystine bridges form between Cys113–Cys149, Cys122–Cys142, and Cys129–Cys146. N-linked (GlcNAc...) asparagine glycosylation is found at Asn152 and Asn158. ShKT domains follow at residues 171-205 (CTDL…CNAC) and 208-243 (CEDA…CNIC). 6 disulfide bridges follow: Cys171/Cys205, Cys178/Cys198, Cys185/Cys202, Cys208/Cys243, Cys215/Cys236, and Cys224/Cys240.

This is an uncharacterized protein from Caenorhabditis elegans.